The primary structure comprises 640 residues: Biosynthetic arginine decarboxylase (640 aa).

Lysine 105 carries the post-translational modification N6-(pyridoxal phosphate)lysine. 290 to 300 (FDVGGGLAVDY) lines the substrate pocket.

This sequence belongs to the Orn/Lys/Arg decarboxylase class-II family. SpeA subfamily. It depends on Mg(2+) as a cofactor. Requires pyridoxal 5'-phosphate as cofactor.

It catalyses the reaction L-arginine + H(+) = agmatine + CO2. Catalyzes the biosynthesis of agmatine from arginine. In Vibrio cholerae serotype O1 (strain ATCC 39315 / El Tor Inaba N16961), this protein is Biosynthetic arginine decarboxylase.